A 2407-amino-acid polypeptide reads, in one-letter code: MVQVPSTNTVKESRHVAISGLPSTLPDDRLQLHFTKFGEIQRLVRQHGNPEIVLVSYMDARGALRARSTKPQFEDSIEYKISAYIPEPTQNSSMASMSSTPSSGQSSSPRNAELSPQRYGDTRGAEVKSPSFRNQMEARRGGPHLSVQSQQRHSREYWPIPEFPSESTACVVYEIQSGSTPERDLFELVKKHSKRSGVPIDIQLESTTEPGWKKARVHYYRLDTDGLKADKSLILGRPPKFRVYYPTSGEQKHPQCHPSTSYAIPKLKGDHLLKASCSVHVPHLDRHSPDHYRRRFESYGQVIDVDMVKSNDNKAFAVVQFTNIDDAQKALQDTNIPKPMSYQSRPSHRIIIFYLPIECTNEEIMLIIRSLSDRIVDICVDWWDRSAVITLDDMEPANLLLKRMKLVGRNNFGEHKVAVDFCSDRFNLYFINRKKENIEVAARSSSPTSKSENDQGSSSPSSSRDRQNLHDPLQTRSSVEHHTNQEDQENNASGSDSSSDSDSEEGSSSSNEDSDEQNDVDEEDDEDVVSEEKRHEPEEGKSSSPGNGHRDESNGDKDHEDSSERFSQPSTSSHHETSHSPEKDSEAYQSRSFSPLNYQSQSPGYEFLESKEIKQEFSPTTSSASSSDLELDMEMPDNPLTRMLERMHWRPFIDVSSFVNRIDEIVELNQKARASYEKFTGRPFPKCNNDEVLSIQKIVFHEPRDYYYYENPCSELEVRIRDWRKLSDTADLDDFRATDSKELGRDQPAGGRTSGRPSLDESRTNRLSFDSTHHPAELAQRSHSLCIGPMTPSTPFPTSQPLLVNTTHLPGTSQPSTSGGITTPRSSQPPPLMSPVSRHNSMSSTGRPASIQTLRHQSVMFPPDVSIPPPPIPPTHDEMMAPRGTPPSRRSSETMVPLRSPPFGTPIQNLLTMPIVPPPHLIAATSTGTHSVSSSAHSTPRHSISGTPVHCEPSNSKTSQPPTPKSRPEKVQIRHDTISKSGPSNAINALQARSQSMTSGDPKKSAPSTPVVRDAGSDLVAQIMSNQPNLGLRKLPRIEKKSSALQNIQNHQPPHSNANSTPSTPSTSTHQAMFKDKEKERKKKEKEKEEREREARREMKRKETKEERNKRKEMERAKRLEDERQERKREKKKERDERKKEKEKVRKKAEKEKLKKKKHRKGDSSDESDSDSNDELDLDVRKSTKEMTQEEKDHQLALLLSKGGIIENLKSRRRSDKRAHDSFEKMQQKSQQRRVLIESSDDEGGKDGDKGNSSNGEESDSEKADLPPPPAPPSLSESADQRLKVLKEREKGELTTSSDDEDHNDAGEIHQQRLTEDRENRKRQKSLTAYSSDEQGERKNVPKRMRRDDSEDAAAKHPGWSAKDDQKQRKRKLEHRRSSEDESKKNAKRDFRDIPHEDVSDEEETEDGSRSRRQSTSSTISNVTAKERKEKSGKTPLRIVPEPTGTPLLSPKILSPKHLSPKTSTSSTKRSSISDHENLISPRQRNRTTSSTSTATTSSKHEALSIPEKPLSPPVTAKSSVSSIDDPSIRDEFSMNSAADSPMSTTGRPMVLTKAAMKAFNSTPPKKKNSSSGQHDSSSGSSSDSSSSDGSTSSDDSSDDEVPKQTEPVTSIPVVASDNGSPENVVVETPSIVSQTPREPEPFTISEQSSESEPEAVPECPEASVEPQMETSQNVEPVSEEHEDSHEHGDSEVAVESQQQPLEHQEEKEELENKILDVAAEHHEEQVQGDEDSVESSIPAPSDEPDPVTQAQEKSAHTLISDQETDQAVQSIFDEEEADEFPQYPDFGISTNEKEVSGKDPHNIKPTEPLNNGHTDLLFSPSSSAHASEKQSTKSEDDMEEDSELVVMEKEVPMEQVIAQEVHVPSEPSPMEEEVKLETSPVPKEEPIKMEESPEQTPTPDLISNNESQDTPGAVNNHLHENHDAVQTPIQLQPASQHQVAQPSPRPAVAPDSQQNGPVLVSQQSQPSPMSSQQSDMAQNLILSSKDINDLAAKLHKNPEALAQATRGDCSGIFQHLLLHAQGNGQNMTPEMLQLKAAFFAQQQENEANQMMQAKMKQQTINKDRIKEQERVKRMYEENERKVEEDRREKQRKEEERQRLAAATAAATMATQKAAEALKQKQEVPRHGFQHVLSMMTPEARSLYEQFPGLSSYINRDSIGATNGVLHLPTQSIQRPSSTASTSSNPPKAPLQPSASVNQNTIDPAEIEEIRVQRWFYKHFPMVWTGRLALKSTEAMINLHLINGSETFLNDVLGRQVTEENPRRDSVKILQRLRLDNGQVEHIYRILTNPEYACCLALSSVNNIENLKENDTNLKSHFIDYLINKKIAGISSLGEVETKFKSARVHVFAPGEIVNRYLSELATSLHDYLQNTDTRYLLIVFTNDKADPNMTGPPSVASLAVPPVSST.

A compositionally biased stretch (low complexity) spans 90 to 112 (QNSSMASMSSTPSSGQSSSPRNA). Residues 90 to 152 (QNSSMASMSS…PHLSVQSQQR (63 aa)) are disordered. One can recognise an RRM domain in the interval 277–335 (CSVHVPHLDRHSPDHYRRRFESYGQVIDVDMVKSNDNKAFAVVQFTNIDDAQKALQDTN). Disordered stretches follow at residues 439-632 (EVAA…LELD), 737-767 (ATDS…TNRL), 785-849 (LCIG…GRPA), 874-896 (PTHD…ETMV), 921-986 (LIAA…PSNA), 993-1012 (RSQS…TPVV), 1025-1844 (SNQP…EDSE), 1858-1918 (IAQE…VNNH), 1932-1976 (LQPA…QQSD), 2077-2103 (EENE…LAAA), and 2172-2200 (SIQR…VNQN). Residues 443 to 456 (RSSSPTSKSENDQG) are compositionally biased toward polar residues. Positions 512–529 (EDSDEQNDVDEEDDEDVV) are enriched in acidic residues. 3 stretches are compositionally biased toward basic and acidic residues: residues 530–541 (SEEKRHEPEEGK), 548–564 (GHRD…DSSE), and 573–586 (SHHE…KDSE). A compositionally biased stretch (polar residues) spans 587–603 (AYQSRSFSPLNYQSQSP). The segment covering 618–627 (SPTTSSASSS) has biased composition (low complexity). Composition is skewed to polar residues over residues 791–826 (TPST…TPRS) and 837–849 (SRHN…GRPA). Residues 924 to 946 (ATSTGTHSVSSSAHSTPRHSISG) are compositionally biased toward polar residues. The span at 966–978 (SRPEKVQIRHDTI) shows a compositional bias: basic and acidic residues. Positions 1043 to 1052 (SALQNIQNHQ) are enriched in polar residues. Residues 1053–1070 (PPHSNANSTPSTPSTSTH) show a composition bias toward low complexity. The segment covering 1086–1153 (KEKEEREREA…KVRKKAEKEK (68 aa)) has biased composition (basic and acidic residues). A compositionally biased stretch (acidic residues) spans 1165–1177 (SDESDSDSNDELD). Composition is skewed to basic and acidic residues over residues 1178-1195 (LDVR…KDHQ), 1218-1227 (RAHDSFEKMQ), 1279-1293 (ADQR…EKGE), 1304-1320 (NDAG…DREN), 1335-1355 (QGER…DAAA), and 1376-1398 (RRSS…PHED). 2 stretches are compositionally biased toward low complexity: residues 1456–1471 (PKHL…TKRS) and 1488–1498 (TTSSTSTATTS). Polar residues predominate over residues 1534 to 1547 (SMNSAADSPMSTTG). Residues 1570 to 1595 (SSSGQHDSSSGSSSDSSSSDGSTSSD) show a composition bias toward low complexity. 2 stretches are compositionally biased toward basic and acidic residues: residues 1679 to 1691 (SEEH…HGDS) and 1703 to 1726 (EHQE…HEEQ). The span at 1749–1770 (TQAQEKSAHTLISDQETDQAVQ) shows a compositional bias: polar residues. A compositionally biased stretch (basic and acidic residues) spans 1792–1805 (NEKEVSGKDPHNIK). The segment covering 1809–1826 (PLNNGHTDLLFSPSSSAH) has biased composition (polar residues). Composition is skewed to basic and acidic residues over residues 1827–1836 (ASEKQSTKSE) and 1873–1892 (EEVK…KMEE). Polar residues-rich tracts occupy residues 1895 to 1911 (EQTP…SQDT) and 1932 to 1942 (LQPASQHQVAQ). Residues 1962-1975 (SQQSQPSPMSSQQS) are compositionally biased toward low complexity. A coiled-coil region spans residues 2049-2110 (NQMMQAKMKQ…AAATAAATMA (62 aa)). The segment covering 2077 to 2099 (EENERKVEEDRREKQRKEEERQR) has biased composition (basic and acidic residues). Residues 2176-2186 (PSSTASTSSNP) show a composition bias toward low complexity. One can recognise an SPOC domain in the interval 2213-2383 (QRWFYKHFPM…TRYLLIVFTN (171 aa)).

In terms of assembly, isoform d interacts with daf-12. Isoform d is widely expressed: detected in the hypodermis, seam cells, intestine, somatic gonad, neurons, vulval precursors, body wall muscle and pharynx.

The protein localises to the nucleus. Probable transcriptional corepressor which modulates activity of the nuclear hormone receptor daf-12 to regulate the dauer diapause. The sequence is that of Daf-12-interacting protein 1 from Caenorhabditis elegans.